Here is a 281-residue protein sequence, read N- to C-terminus: Bifunctional protein FolD (281 aa).

NADP(+)-binding positions include 165 to 167 (GRG), Thr-192, and Val-233.

It belongs to the tetrahydrofolate dehydrogenase/cyclohydrolase family. In terms of assembly, homodimer.

The enzyme catalyses (6R)-5,10-methylene-5,6,7,8-tetrahydrofolate + NADP(+) = (6R)-5,10-methenyltetrahydrofolate + NADPH. It catalyses the reaction (6R)-5,10-methenyltetrahydrofolate + H2O = (6R)-10-formyltetrahydrofolate + H(+). Its pathway is one-carbon metabolism; tetrahydrofolate interconversion. Its function is as follows. Catalyzes the oxidation of 5,10-methylenetetrahydrofolate to 5,10-methenyltetrahydrofolate and then the hydrolysis of 5,10-methenyltetrahydrofolate to 10-formyltetrahydrofolate. This is Bifunctional protein FolD from Mycobacteroides abscessus (strain ATCC 19977 / DSM 44196 / CCUG 20993 / CIP 104536 / JCM 13569 / NCTC 13031 / TMC 1543 / L948) (Mycobacterium abscessus).